A 364-amino-acid polypeptide reads, in one-letter code: Alanine racemase (364 aa).

The active-site Proton acceptor; specific for D-alanine is lysine 39. Lysine 39 bears the N6-(pyridoxal phosphate)lysine mark. Residue arginine 137 participates in substrate binding. The Proton acceptor; specific for L-alanine role is filled by tyrosine 258. Methionine 306 contacts substrate.

Belongs to the alanine racemase family. Pyridoxal 5'-phosphate serves as cofactor.

It carries out the reaction L-alanine = D-alanine. It functions in the pathway amino-acid biosynthesis; D-alanine biosynthesis; D-alanine from L-alanine: step 1/1. Catalyzes the interconversion of L-alanine and D-alanine. May also act on other amino acids. The protein is Alanine racemase (alr) of Methylobacterium sp. (strain 4-46).